The following is a 278-amino-acid chain: Large ribosomal subunit protein uL2c (278 aa).

The tract at residues N224–K256 is disordered.

Belongs to the universal ribosomal protein uL2 family. In terms of assembly, part of the 50S ribosomal subunit.

It is found in the plastid. The polypeptide is Large ribosomal subunit protein uL2c (rpl2) (Cuscuta exaltata (Tall dodder)).